We begin with the raw amino-acid sequence, 597 residues long: Elongation factor 4 (597 aa).

Positions 2–184 constitute a tr-type G domain; the sequence is KHIRNFSIIA…KIVSAIPAPQ (183 aa). GTP-binding positions include 14–19 and 131–134; these read DHGKST and NKID.

It belongs to the TRAFAC class translation factor GTPase superfamily. Classic translation factor GTPase family. LepA subfamily.

It is found in the cell inner membrane. The catalysed reaction is GTP + H2O = GDP + phosphate + H(+). Its function is as follows. Required for accurate and efficient protein synthesis under certain stress conditions. May act as a fidelity factor of the translation reaction, by catalyzing a one-codon backward translocation of tRNAs on improperly translocated ribosomes. Back-translocation proceeds from a post-translocation (POST) complex to a pre-translocation (PRE) complex, thus giving elongation factor G a second chance to translocate the tRNAs correctly. Binds to ribosomes in a GTP-dependent manner. The polypeptide is Elongation factor 4 (Vibrio cholerae serotype O1 (strain ATCC 39541 / Classical Ogawa 395 / O395)).